We begin with the raw amino-acid sequence, 47 residues long: Gas vesicle protein A (47 aa).

This sequence belongs to the gas vesicle GvpA family. The gas vesicle shell is 2 nm thick and consists of a single layer of this protein. It forms helical ribs nearly perpendicular to the long axis of the vesicle.

Its subcellular location is the gas vesicle shell. Gas vesicles are hollow, gas filled proteinaceous nanostructures found in some microorganisms. During planktonic growth they allow positioning of the organism at a favorable depth for light or nutrient acquisition. GvpA forms the protein shell. This is Gas vesicle protein A from Dactylococcopsis salina (Myxobaktron salinum).